The following is an 87-amino-acid chain: Small ribosomal subunit protein bS20 (87 aa).

Residues 1–27 (MANIKSAKKRALQSEKRRQHNASRRSM) are disordered.

Belongs to the bacterial ribosomal protein bS20 family.

Binds directly to 16S ribosomal RNA. This is Small ribosomal subunit protein bS20 from Aeromonas hydrophila subsp. hydrophila (strain ATCC 7966 / DSM 30187 / BCRC 13018 / CCUG 14551 / JCM 1027 / KCTC 2358 / NCIMB 9240 / NCTC 8049).